Reading from the N-terminus, the 695-residue chain is Elongation factor G (695 aa).

One can recognise a tr-type G domain in the interval 9–283; sequence EKIRNIGIVA…AVIDYLPSPL (275 aa). GTP is bound by residues 18–25, 82–86, and 136–139; these read AHIDAGKT, DTPGH, and NKMD.

The protein belongs to the TRAFAC class translation factor GTPase superfamily. Classic translation factor GTPase family. EF-G/EF-2 subfamily.

Its subcellular location is the cytoplasm. Its function is as follows. Catalyzes the GTP-dependent ribosomal translocation step during translation elongation. During this step, the ribosome changes from the pre-translocational (PRE) to the post-translocational (POST) state as the newly formed A-site-bound peptidyl-tRNA and P-site-bound deacylated tRNA move to the P and E sites, respectively. Catalyzes the coordinated movement of the two tRNA molecules, the mRNA and conformational changes in the ribosome. The protein is Elongation factor G of Petrotoga mobilis (strain DSM 10674 / SJ95).